Here is a 474-residue protein sequence, read N- to C-terminus: Iroquois-class homeodomain protein IRX-2 (474 aa).

A DNA-binding region (homeobox; TALE-type) is located at residues 115-177; it reads DPAYRKNATR…NARRRLKKEN (63 aa). 3 disordered regions span residues 177–220, 262–373, and 420–461; these read NKMT…EDEG, EDLE…PGGS, and PGET…DTSE. Position 187 is a phosphoserine (Ser-187). A compositionally biased stretch (basic and acidic residues) spans 196–210; the sequence is DASRSKEESSDKAQD. A compositionally biased stretch (acidic residues) spans 262–275; that stretch reads EDLEDEEDEEDECE. Low complexity-rich tracts occupy residues 293-305 and 358-373; these read EAPLLSPAPEAAP and PAAAAPASTGAPPGGS.

The protein belongs to the TALE/IRO homeobox family. Expressed in specific and overlapping patterns with Irx1 and Irx3 in the developing and adult metanephric kidney. In the adult metanephros, renal expression is found in the loop of Henle in the S3 proximal tubule segment and in the thick ascending limb (TAL) of the distal tubule.

It localises to the nucleus. This is Iroquois-class homeodomain protein IRX-2 (Irx2) from Mus musculus (Mouse).